The primary structure comprises 235 residues: 2,3-bisphosphoglycerate-dependent phosphoglycerate mutase (235 aa).

Substrate-binding positions include 8–15, 21–22, arginine 58, 110–113, lysine 121, 137–138, and 181–182; these read RHGESIWN, TG, ERYY, RR, and GN. The active-site Tele-phosphohistidine intermediate is histidine 9. Glutamate 110 functions as the Proton donor/acceptor in the catalytic mechanism.

The protein belongs to the phosphoglycerate mutase family. BPG-dependent PGAM subfamily.

The catalysed reaction is (2R)-2-phosphoglycerate = (2R)-3-phosphoglycerate. It participates in carbohydrate degradation; glycolysis; pyruvate from D-glyceraldehyde 3-phosphate: step 3/5. Functionally, catalyzes the interconversion of 2-phosphoglycerate and 3-phosphoglycerate. The chain is 2,3-bisphosphoglycerate-dependent phosphoglycerate mutase from Methanococcus vannielii (strain ATCC 35089 / DSM 1224 / JCM 13029 / OCM 148 / SB).